The chain runs to 355 residues: 4-hydroxy-3-methylbut-2-en-1-yl diphosphate synthase (flavodoxin) (355 aa).

[4Fe-4S] cluster is bound by residues Cys266, Cys269, Cys301, and Glu308.

This sequence belongs to the IspG family. Requires [4Fe-4S] cluster as cofactor.

It carries out the reaction (2E)-4-hydroxy-3-methylbut-2-enyl diphosphate + oxidized [flavodoxin] + H2O + 2 H(+) = 2-C-methyl-D-erythritol 2,4-cyclic diphosphate + reduced [flavodoxin]. The protein operates within isoprenoid biosynthesis; isopentenyl diphosphate biosynthesis via DXP pathway; isopentenyl diphosphate from 1-deoxy-D-xylulose 5-phosphate: step 5/6. Functionally, converts 2C-methyl-D-erythritol 2,4-cyclodiphosphate (ME-2,4cPP) into 1-hydroxy-2-methyl-2-(E)-butenyl 4-diphosphate. The polypeptide is 4-hydroxy-3-methylbut-2-en-1-yl diphosphate synthase (flavodoxin) (Caldanaerobacter subterraneus subsp. tengcongensis (strain DSM 15242 / JCM 11007 / NBRC 100824 / MB4) (Thermoanaerobacter tengcongensis)).